A 104-amino-acid chain; its full sequence is MAANPSGQGFQNKNRVAILAELDKEKRKLLMQNQSSTNHPGASIALSRPALNKDFRDHAEQQHIAAQQKAALQHAHAHSSGYFITQDSAFGNLILPVLPRLDPE.

Ala2 bears the N-acetylalanine mark.

It belongs to the SOSS-C family. In terms of assembly, component of the SOSS complex, composed of SOSS-B (SOSS-B1/NABP2 or SOSS-B2/NABP1), SOSS-A/INTS3 and SOSS-C/INIP. SOSS complexes containing SOSS-B1/NABP2 are more abundant than complexes containing SOSS-B2/NABP1. Interacts with INTS3; the interaction is direct.

Its subcellular location is the nucleus. Functionally, component of the SOSS complex, a multiprotein complex that functions downstream of the MRN complex to promote DNA repair and G2/M checkpoint. The SOSS complex associates with single-stranded DNA at DNA lesions and influences diverse endpoints in the cellular DNA damage response including cell-cycle checkpoint activation, recombinational repair and maintenance of genomic stability. Required for efficient homologous recombination-dependent repair of double-strand breaks (DSBs) and ATM-dependent signaling pathways. This is SOSS complex subunit C (INIP) from Bos taurus (Bovine).